The primary structure comprises 735 residues: Serine/threonine-protein kinase BRSK2 (735 aa).

The region spanning 20–271 (YRLEKTLGKG…LEHIQKHIWY (252 aa)) is the Protein kinase domain. ATP contacts are provided by residues 26–34 (LGKGQTGLV) and Lys49. Catalysis depends on Asp142, which acts as the Proton acceptor. Phosphothreonine; by LKB1 is present on Thr175. Position 261 is a phosphothreonine; by PKA (Thr261). Ser295 is subject to Phosphoserine. The 43-residue stretch at 298 to 340 (DIDPDVLDSMHSLGCFRDRNKLLQDLLSEEENQEKMIYFLLLD) folds into the UBA domain. Residues 346 to 367 (PSHEDEDLPPRNEIDPPRKRVD) show a composition bias toward basic and acidic residues. 2 disordered regions span residues 346–476 (PSHE…GVPW) and 492–516 (RFHR…SSPE). Residues Ser368, Ser383, Ser394, Ser413, Ser424, and Ser428 each carry the phosphoserine modification. Residues 411–429 (SRSISGASSGLSTSPLSSP) show a composition bias toward low complexity. The span at 432 to 446 (TPHPSPRGSPLPTPK) shows a compositional bias: pro residues. Ser456 is subject to Phosphoserine. 3 positions are modified to phosphothreonine: Thr460, Thr464, and Thr510. Residues Ser513, Ser514, and Ser521 each carry the phosphoserine modification. Positions 604–606 (KEN) match the KEN box motif. A disordered region spans residues 682–735 (KNGQAAQAPSTPAKRSAHGPLGDSAAAGPGGDTEYPMGKDMAKMGPPAARREQP).

Belongs to the protein kinase superfamily. CAMK Ser/Thr protein kinase family. SNF1 subfamily. In terms of assembly, interacts with FZR1, a regulatory subunit of the APC ubiquitin ligase complex. Interacts with COPS5. Interacts with PAK1. It depends on Mg(2+) as a cofactor. Post-translationally, may be phosphorylated at Thr-261 by PKA. Phosphorylated at Thr-175 by STK11/LKB1 in complex with STE20-related adapter-alpha (STRADA) pseudo kinase and CAB39. Not phosphorylated at Thr-175 by CaMKK2. In contrast, it is phosphorylated and activated by CaMKK1. May be inactivated via dephosphorylation of Thr-175 by PP2C. In terms of processing, polyubiquitinated by the APC complex in conjunction with FZR1, leading to its proteasomal degradation. Targeted for proteasomal degradation by interaction with COPS5. BRSK2 levels change during the cell cycle. BRSK2 levels are low at the G1/S boundary and gradually increase as cells progress into G2 phase. BRSK2 levels decrease rapidly at the end of mitosis. In terms of tissue distribution, detected in pancreas islets and in brain (at protein level). Detected in brain and pancreas.

It localises to the cytoplasm. The protein localises to the cytoskeleton. Its subcellular location is the microtubule organizing center. It is found in the centrosome. The protein resides in the perinuclear region. It localises to the endoplasmic reticulum. It catalyses the reaction L-seryl-[protein] + ATP = O-phospho-L-seryl-[protein] + ADP + H(+). The enzyme catalyses L-threonyl-[protein] + ATP = O-phospho-L-threonyl-[protein] + ADP + H(+). It carries out the reaction L-seryl-[tau protein] + ATP = O-phospho-L-seryl-[tau protein] + ADP + H(+). The catalysed reaction is L-threonyl-[tau protein] + ATP = O-phospho-L-threonyl-[tau protein] + ADP + H(+). With respect to regulation, activated by phosphorylation on Thr-175 by STK11/LKB1. Serine/threonine-protein kinase that plays a key role in polarization of neurons and axonogenesis, cell cycle progress and insulin secretion. Phosphorylates CDK16, CDC25C, MAPT/TAU, PAK1 and WEE1. Following phosphorylation and activation by STK11/LKB1, acts as a key regulator of polarization of cortical neurons, probably by mediating phosphorylation of microtubule-associated proteins such as MAPT/TAU at 'Thr-504' and 'Ser-554'. Also regulates neuron polarization by mediating phosphorylation of WEE1 at 'Ser-642' in post-mitotic neurons, leading to down-regulate WEE1 activity in polarized neurons. Plays a role in the regulation of the mitotic cell cycle progress and the onset of mitosis. Plays a role in the regulation of insulin secretion in response to elevated glucose levels, probably via phosphorylation of CDK16 and PAK1. While BRSK2 phosphorylated at Thr-175 can inhibit insulin secretion, BRSK2 phosphorylated at Thr-261 can promote insulin secretion. Regulates reorganization of the actin cytoskeleton. May play a role in the apoptotic response triggered by endoplasmic reticulum (ER) stress. This is Serine/threonine-protein kinase BRSK2 (Brsk2) from Mus musculus (Mouse).